The primary structure comprises 164 residues: Large ribosomal subunit protein uL15 (164 aa).

Residues 1 to 14 show a composition bias toward polar residues; sequence MKLNEIQDNPGSSK. Residues 1-35 form a disordered region; sequence MKLNEIQDNPGSSKSRMRVGRGIGSGKGKTCGRGV. A compositionally biased stretch (gly residues) spans 21 to 35; the sequence is RGIGSGKGKTCGRGV.

It belongs to the universal ribosomal protein uL15 family. Part of the 50S ribosomal subunit.

Its function is as follows. Binds to the 23S rRNA. This Methylocella silvestris (strain DSM 15510 / CIP 108128 / LMG 27833 / NCIMB 13906 / BL2) protein is Large ribosomal subunit protein uL15.